The following is a 514-amino-acid chain: MVVEFKNEPGYDFSVQENVDMFKKALKDVEKELGQDIPLVINGEKIFKDDKIKSINPADTSQVIANASKATKQDVEDAFKAANEAYKSWKTWSANDRAELMLRVSAIIRRRKAEIAAIMVYEAGKPWDEAVGDAAEGIDFIEYYARSMMDLAQGKPVLDREGEHNKYFYKSIGTGVTIPPWNFPFAIMAGTTLAPVVAGNIVLLKPAEDTPYIAYKLMGILEEAGLPKGVVNFVPGDPKEIGDYLVDHKDTHFVTFTGSRATGTRIYERSAVVQEGQNFLKRVIAEMGGKDAIVVDENIDTDMAAEAIVTSAFGFSGQKCSACSRAIVHKDVYDEVLEKSIKLTKELTLGNTVDNTYMGPVINKKQFDKIKNYIEIGKEEGKLEQGGGTDDSKGYFVEPTIISGLKSKDRIMQEEIFGPVVGFVKVNDFDEAIEVANDTDYGLTGAVITNNREHWIKAVNEFDVGNLYLNRGCTSAVVGYHPFGGFKMSGTDAKTGSPDYLLHFLEQKVVSEMF.

Active-site residues include Glu-286 and Cys-320.

It belongs to the aldehyde dehydrogenase family. RocA subfamily.

The enzyme catalyses L-glutamate 5-semialdehyde + NAD(+) + H2O = L-glutamate + NADH + 2 H(+). It participates in amino-acid degradation; L-proline degradation into L-glutamate; L-glutamate from L-proline: step 2/2. This is 1-pyrroline-5-carboxylate dehydrogenase from Staphylococcus aureus (strain MSSA476).